We begin with the raw amino-acid sequence, 655 residues long: E3 ubiquitin-protein ligase TRIM32 (655 aa).

Residues 21–66 form an RING-type zinc finger; sequence CPICMESFTEEQLRPKLLHCGHTICRQCLEKLLASSINGVRCPFCS. Ser-56 carries the post-translational modification Phosphoserine; by CHEK2. The B box-type; atypical zinc-finger motif lies at 96-139; it reads VGLLMCRGCGRRLPRQFCRSCGVVLCEPCREADHQPPGHCTLPV. Positions 101, 104, 124, and 129 each coordinate Zn(2+). Positions 139–198 form a coiled coil; it reads VKEAAEERRRDFGEKLTRLRELTGELQRRKAALEGVSRDLQARYKAVLQEYGHEERRIQE. The tract at residues 327–347 is disordered; sequence MDMSPEEVAPSPRASPAKQRS. 3 positions are modified to phosphoserine: Ser-330, Ser-337, and Ser-341. NHL repeat units lie at residues 360 to 403, 417 to 460, 461 to 501, 564 to 607, and 608 to 648; these read LKKM…FNRK, DSFV…YTMD, GHCV…FTVD, GRQI…FPKG, and GGYS…YSYH.

This sequence belongs to the TRIM/RBCC family. As to quaternary structure, it self-associates. Interacts with DTNBP1. Interacts with PIAS4/PIASY upon treatment with UVB and TNF-alpha. Interacts with AMBRA1; promoting activation of ULK1 through unanchored 'Lys-63'-linked polyubiquitin chains. Interacts with TICAM1 and TAX1BP1; these interactions target TICAM1 to TAX1BP1-mediated selective autophagic degradation. Ubiquitinated. In terms of processing, phosphorylation at Ser-56 by CHEK2 under oxidative stress, activates the E3 ligase activity and promotes ATG7 ubiquitination leading to positive regulation of the autophagosme assembly. In terms of tissue distribution, ubiquitous. High expression in brain.

The protein resides in the cytoplasm. It catalyses the reaction S-ubiquitinyl-[E2 ubiquitin-conjugating enzyme]-L-cysteine + [acceptor protein]-L-lysine = [E2 ubiquitin-conjugating enzyme]-L-cysteine + N(6)-ubiquitinyl-[acceptor protein]-L-lysine.. It functions in the pathway protein modification; protein ubiquitination. Functionally, E3 ubiquitin ligase that plays a role in various biological processes including neural stem cell differentiation, innate immunity, inflammatory resonse and autophagy. Plays a role in virus-triggered induction of IFN-beta and TNF-alpha by mediating the ubiquitination of STING1. Mechanistically, targets STING1 for 'Lys-63'-linked ubiquitination which promotes the interaction of STING1 with TBK1. Regulates bacterial clearance and promotes autophagy in Mycobacterium tuberculosis-infected macrophages. Negatively regulates TLR3/4-mediated innate immune and inflammatory response by triggering the autophagic degradation of TICAM1 in an E3 activity-independent manner. Plays an essential role in oxidative stress induced cell death by inducing loss of transmembrane potential and enhancing mitochondrial reactive oxygen species (ROS) production during oxidative stress conditions. Ubiquitinates XIAP and targets it for proteasomal degradation. Ubiquitinates DTNBP1 (dysbindin) and promotes its degradation. May ubiquitinate BBS2. Ubiquitinates PIAS4/PIASY and promotes its degradation in keratinocytes treated with UVB and TNF-alpha. Also acts as a regulator of autophagy by mediating formation of unanchored 'Lys-63'-linked polyubiquitin chains that activate ULK1: interaction with AMBRA1 is required for ULK1 activation. Positively regulates dendritic branching by promoting ubiquitination and subsequent degradation of the epigenetic factor CDYL. Under metabolic stress and phosphorylation by CHK2, mediates 'Lys-63'-linked ubiquitination of ATG7 at 'Lys-41' to initiate autophagy. The polypeptide is E3 ubiquitin-protein ligase TRIM32 (Mus musculus (Mouse)).